Consider the following 511-residue polypeptide: Ulvan-active sulfatase (511 aa).

An N-terminal signal peptide occupies residues 1–34 (MNFKQNIVYKKMAISMKITAIRPIALVISFTLLS). Cys-35 is lipidated: N-palmitoyl cysteine. Cys-35 carries S-diacylglycerol cysteine lipidation. 2 residues coordinate Ca(2+): Asp-59 and Cys-99. The Nucleophile role is filled by Cys-99. Cys-99 carries the post-translational modification 3-oxoalanine (Cys). His-149 is an active-site residue. Asp-305 provides a ligand contact to Ca(2+).

The protein belongs to the sulfatase family. Ca(2+) serves as cofactor. Post-translationally, the conversion to 3-oxoalanine (also known as C-formylglycine, FGly), of a serine or cysteine residue in prokaryotes and of a cysteine residue in eukaryotes, is critical for catalytic activity. This post-translational modification is severely defective in multiple sulfatase deficiency (MSD).

The protein resides in the cell membrane. In terms of biological role, sulfatase involved in ulvan degradation. Ulvan is the main polysaccharide component of the Ulvales (green seaweed) cell wall. It is composed of disaccharide building blocks comprising 3-sulfated rhamnose (Rha3S) linked to D-glucuronic acid (GlcA), L-iduronic acid (IduA), or D-xylose (Xyl). The polypeptide is Ulvan-active sulfatase (Formosa agariphila (strain DSM 15362 / KCTC 12365 / LMG 23005 / KMM 3901 / M-2Alg 35-1)).